The chain runs to 375 residues: Growth/differentiation factor 8 (375 aa).

An N-terminal signal peptide occupies residues 1-23; the sequence is MQKLAVYVYIYLFVQISVDPVAL. A propeptide spanning residues 24–266 is cleaved from the precursor; it reads DGSSQPTENT…VTDTPKRSRR (243 aa). Residue Asn71 is glycosylated (N-linked (GlcNAc...) asparagine). Cystine bridges form between Cys272–Cys282, Cys281–Cys340, Cys309–Cys372, and Cys313–Cys374.

It belongs to the TGF-beta family. In terms of assembly, homodimer; disulfide-linked.

It localises to the secreted. In terms of biological role, acts specifically as a negative regulator of skeletal muscle growth. In Excalfactoria chinensis (Blue-breasted quail), this protein is Growth/differentiation factor 8 (MSTN).